The sequence spans 566 residues: Proline--tRNA ligase (566 aa).

It belongs to the class-II aminoacyl-tRNA synthetase family. ProS type 1 subfamily. Homodimer.

It localises to the cytoplasm. The enzyme catalyses tRNA(Pro) + L-proline + ATP = L-prolyl-tRNA(Pro) + AMP + diphosphate. Functionally, catalyzes the attachment of proline to tRNA(Pro) in a two-step reaction: proline is first activated by ATP to form Pro-AMP and then transferred to the acceptor end of tRNA(Pro). As ProRS can inadvertently accommodate and process non-cognate amino acids such as alanine and cysteine, to avoid such errors it has two additional distinct editing activities against alanine. One activity is designated as 'pretransfer' editing and involves the tRNA(Pro)-independent hydrolysis of activated Ala-AMP. The other activity is designated 'posttransfer' editing and involves deacylation of mischarged Ala-tRNA(Pro). The misacylated Cys-tRNA(Pro) is not edited by ProRS. The sequence is that of Proline--tRNA ligase from Campylobacter concisus (strain 13826).